We begin with the raw amino-acid sequence, 125 residues long: Holo-[acyl-carrier-protein] synthase (125 aa).

The Mg(2+) site is built by aspartate 8 and glutamate 57.

It belongs to the P-Pant transferase superfamily. AcpS family. It depends on Mg(2+) as a cofactor.

The protein resides in the cytoplasm. The enzyme catalyses apo-[ACP] + CoA = holo-[ACP] + adenosine 3',5'-bisphosphate + H(+). Transfers the 4'-phosphopantetheine moiety from coenzyme A to a Ser of acyl-carrier-protein. In Thermus thermophilus (strain ATCC BAA-163 / DSM 7039 / HB27), this protein is Holo-[acyl-carrier-protein] synthase.